Reading from the N-terminus, the 430-residue chain is MKTSKEITINKKNKFGAEILCIGSEILLGNIVNTNSQWIAAQLAILGIPHFRQTVIGDNPARLEEAILEASNRSEILITTGGLGPTPDDIKTKVIADTFKTPLEQRNDILIDLRNKSKDKVSKLSESQKKQSLVPKGAKIINNYSGTAPGIFWSPKENFTILTFPGVPSELKEMWAKEASKLLISNNLSKEVISSKVLHFAGITESLLADKIQHLLISKNPTVATYASTGSVKVRITARGKSSEKTNRLIEPIKKELTQITGLKCFGLDNETLEEIVFKLLLKRKETIAVAESCTGGGIGSKLTKIPGSSQIFHGGVIAYNNSIKQRLLGVPEEIINTHGAVSKQVVESMARGVQIKFKVNWAISVSGIAGPTGGSKSKPVGLVNFCIKGPKTLITWEENFGSNKTREDIQKLSVLNALDRLRLSIIMAN.

Belongs to the CinA family.

The polypeptide is CinA-like protein (Prochlorococcus marinus (strain NATL2A)).